We begin with the raw amino-acid sequence, 109 residues long: Large ribosomal subunit protein uL24 (109 aa).

The protein belongs to the universal ribosomal protein uL24 family. In terms of assembly, part of the 50S ribosomal subunit.

One of two assembly initiator proteins, it binds directly to the 5'-end of the 23S rRNA, where it nucleates assembly of the 50S subunit. Its function is as follows. One of the proteins that surrounds the polypeptide exit tunnel on the outside of the subunit. This chain is Large ribosomal subunit protein uL24, found in Ehrlichia ruminantium (strain Gardel).